We begin with the raw amino-acid sequence, 92 residues long: Small ribosomal subunit protein uS19 (92 aa).

It belongs to the universal ribosomal protein uS19 family.

In terms of biological role, protein S19 forms a complex with S13 that binds strongly to the 16S ribosomal RNA. In Allorhizobium ampelinum (strain ATCC BAA-846 / DSM 112012 / S4) (Agrobacterium vitis (strain S4)), this protein is Small ribosomal subunit protein uS19.